The sequence spans 426 residues: UPF0761 membrane protein Nmul_A0452 (426 aa).

6 helical membrane-spanning segments follow: residues 48-68 (LLSL…FPAF), 106-126 (LTAI…LTID), 145-165 (LLIY…SLSL), 187-207 (LLRL…YLIV), 217-237 (AIAG…GFAF), and 255-275 (IPIF…GAVI).

The protein belongs to the UPF0761 family.

Its subcellular location is the cell inner membrane. The polypeptide is UPF0761 membrane protein Nmul_A0452 (Nitrosospira multiformis (strain ATCC 25196 / NCIMB 11849 / C 71)).